The chain runs to 314 residues: Solute carrier family 25 member 33 (314 aa).

Solcar repeat units follow at residues 4 to 111, 119 to 206, and 224 to 308; these read KDTL…SKET, NSGV…LKKY, and SDFL…IVHL. Helical transmembrane passes span 7–27, 44–58, 114–134, 183–203, 226–246, and 291–311; these read LLHL…TCPL, VFQV…AGVI, GIFV…AAFI, LTAS…YETL, FLGL…IAYP, and QIPN…LLAE.

The protein belongs to the mitochondrial carrier (TC 2.A.29) family.

The protein resides in the mitochondrion inner membrane. Mitochondrial transporter that imports/exports pyrimidine nucleotides into and from mitochondria which participates in dendritic cell endocytosis. This chain is Solute carrier family 25 member 33 (slc25a33), found in Danio rerio (Zebrafish).